A 118-amino-acid chain; its full sequence is Small ribosomal subunit protein uS13 (118 aa).

The disordered stretch occupies residues 94–118; it reads SLPVRGQRTKTNARTRKGPRRPIKR.

It belongs to the universal ribosomal protein uS13 family. Part of the 30S ribosomal subunit. Forms a loose heterodimer with protein S19. Forms two bridges to the 50S subunit in the 70S ribosome.

Its function is as follows. Located at the top of the head of the 30S subunit, it contacts several helices of the 16S rRNA. In the 70S ribosome it contacts the 23S rRNA (bridge B1a) and protein L5 of the 50S subunit (bridge B1b), connecting the 2 subunits; these bridges are implicated in subunit movement. Contacts the tRNAs in the A and P-sites. In Dichelobacter nodosus (strain VCS1703A), this protein is Small ribosomal subunit protein uS13.